The following is a 522-amino-acid chain: MVFVELSIFVAFIGLLLYKWSVYTFGYFSKRGVAHEKPIPLLGNIPWSVLMGKESYIKHSIDLHLRLKQHKVYGVFNLRDPLYYLSDPELIRQVGIKNFDTFTNHRKGITEGFNDTSVISKSLLSLRDRRWKQMRSTLTPTFTSLKIRQMFELIHFCNVEAVDFVQRQLDAGTSELELKDFFTRYTNDVIATAAFGIQVNSFKDPNNEFFSIGQRISEFTFWGGLKVMLYILMPKLMKALRVPVMDMNNVDYFKKLVFGAMKYRKEQSIVRPDMIHLLMEAQRQFKAEQEGSAESAAQQDKAEFNDDDLLAQCLLFFSAGFETVATCLSFTSYELMMNPEVQEKLLAEILAVKEQLGEKPLDYDTLMGMKYLNCVVSESLRKWPPAFIVDRMCGSDFQLKDEEGEVVVNLREDDLVHINVGALHHDPDNFPEPEQFRPERFDEEHKHEIRQFTYLPFGVGQRSCIGNRLALMEVKSLIFQLVLRYHLKPTDRTPADMMSSISGFRLLPRELFWCKLESRGPA.

Cysteine 464 provides a ligand contact to heme.

It belongs to the cytochrome P450 family. The cofactor is heme.

The protein resides in the endoplasmic reticulum membrane. Its subcellular location is the microsome membrane. In terms of biological role, may be involved in the metabolism of insect hormones and in the breakdown of synthetic insecticides. The polypeptide is Cytochrome P450 9c1 (Cyp9c1) (Drosophila melanogaster (Fruit fly)).